A 4652-amino-acid chain; its full sequence is Low-density lipoprotein receptor-related protein 2 (4652 aa).

A signal peptide spans 1–25 (MERWAAAAACTLLLAFAACLAPASG). Topologically, residues 26 to 4422 (RECLGNEFRC…SKGISPGTTV (4397 aa)) are extracellular. 7 LDL-receptor class A domains span residues 27-63 (ECLG…IGCP), 66-104 (TCGS…QRCP), 108-144 (TCSS…INCR), 142-181 (NCRY…LNCT), 183-219 (RCLR…HSCS), 223-259 (PCKG…DGCE), and 267-308 (ECYP…RVCD). 21 disulfides stabilise this stretch: Cys-28/Cys-40, Cys-35/Cys-53, Cys-47/Cys-62, Cys-67/Cys-80, Cys-74/Cys-93, Cys-87/Cys-103, Cys-109/Cys-121, Cys-116/Cys-134, Cys-128/Cys-143, Cys-143/Cys-158, Cys-153/Cys-171, Cys-165/Cys-180, Cys-184/Cys-196, Cys-191/Cys-209, Cys-203/Cys-218, Cys-224/Cys-236, Cys-231/Cys-249, Cys-243/Cys-258, Cys-268/Cys-281, Cys-275/Cys-294, and Cys-288/Cys-307. 2 N-linked (GlcNAc...) asparagine glycosylation sites follow: Asn-160 and Asn-179. A glycan (N-linked (GlcNAc...) asparagine) is linked at Asn-341. The EGF-like 1; calcium-binding domain maps to 348-386 (DFNDCQIWGICDHFCEDRIGHHQCFCAEGYVLEHEQHCR). 3 disulfides stabilise this stretch: Cys-352-Cys-362, Cys-358-Cys-371, and Cys-373-Cys-385. N-linked (GlcNAc...) asparagine glycosylation is present at Asn-388. LDL-receptor class B repeat units lie at residues 436–478 (SKVF…DWIN), 479–521 (NKLY…DPTV), 522–568 (GYLF…DLVA), 569–613 (KRVY…FEDN), 753–795 (NAIF…DWIS), 796–837 (RNLY…HPIA), 838–881 (GYIF…DWGS), and 882–925 (SRLY…FGEY). A glycan (N-linked (GlcNAc...) asparagine) is linked at Asn-771. The N-linked (GlcNAc...) asparagine glycan is linked to Asn-866. Residue Asn-1015 is glycosylated (N-linked (GlcNAc...) asparagine). The LDL-receptor class A 8 domain occupies 1025 to 1061 (QCGALSFPCNNGRCVPLHYRCDGVDDCHDNSDEVQCG). 3 disulfides stabilise this stretch: Cys-1026-Cys-1038, Cys-1033-Cys-1051, and Cys-1045-Cys-1060. Asn-1064 carries an N-linked (GlcNAc...) asparagine glycan. LDL-receptor class A domains lie at 1066 to 1104 (SCAP…QNCS), 1110 to 1146 (SCRA…KRCD), 1150 to 1186 (TCSP…SACV), 1188 to 1225 (NCTD…IDCP), 1231 to 1269 (MCRQ…SGCP), 1272 to 1308 (TCPX…KDCP), and 1313 to 1351 (LCPS…PLCN). Intrachain disulfides connect Cys-1067–Cys-1081, Cys-1074–Cys-1094, Cys-1088–Cys-1103, Cys-1111–Cys-1123, Cys-1118–Cys-1136, Cys-1130–Cys-1145, Cys-1151–Cys-1163, Cys-1158–Cys-1176, and Cys-1170–Cys-1185. Asn-1102 carries an N-linked (GlcNAc...) asparagine glycan. Ca(2+) is bound by residues Trp-1128, Asp-1131, Asp-1133, Asp-1135, Asp-1141, and Glu-1142. Residue Asn-1188 is glycosylated (N-linked (GlcNAc...) asparagine). 12 disulfide bridges follow: Cys-1189–Cys-1202, Cys-1196–Cys-1215, Cys-1209–Cys-1224, Cys-1232–Cys-1245, Cys-1239–Cys-1258, Cys-1252–Cys-1268, Cys-1273–Cys-1285, Cys-1280–Cys-1298, Cys-1292–Cys-1307, Cys-1314–Cys-1327, Cys-1321–Cys-1340, and Cys-1334–Cys-1350. Tyr-1207, Asp-1210, Val-1212, Asp-1214, Asp-1220, and Glu-1221 together coordinate Ca(2+). The N-linked (GlcNAc...) asparagine glycan is linked to Asn-1329. N-linked (GlcNAc...) asparagine glycans are attached at residues Asn-1385, Asn-1452, Asn-1498, and Asn-1552. 10 LDL-receptor class B repeats span residues 1480–1522 (GRIF…DWVG), 1523–1565 (RNLY…DPRV), 1568–1611 (RVIF…DYPT), 1612–1654 (RLLY…TIFE), 1655–1696 (DSIY…VHPA), 1789–1831 (QFLY…DWLS), 1832–1881 (RNLY…DPAK), 1882–1929 (GKLY…DIQE), 1930–1971 (QKLY…YGPY), and 1972–2012 (LYYA…YRRR). 2 N-linked (GlcNAc...) asparagine glycosylation sites follow: Asn-1677 and Asn-1809. N-linked (GlcNAc...) asparagine glycosylation is present at Asn-2053. LDL-receptor class B repeat units lie at residues 2105-2154 (GFVY…DWVA), 2155-2199 (GNLY…DPKN), 2200-2243 (RYLF…DHNS), 2244-2287 (GYIY…FGNS), 2429-2475 (NRIY…DWIG), 2476-2516 (RRIY…DPCQ), 2517-2560 (GYMY…DYKE), 2561-2602 (NLLY…YGQY), and 2603-2644 (IYWT…VVNN). Asn-2175 and Asn-2222 each carry an N-linked (GlcNAc...) asparagine glycan. Asn-2485 is a glycosylation site (N-linked (GlcNAc...) asparagine). 10 consecutive LDL-receptor class A domains span residues 2696–2734 (RCNS…TLCA), 2737–2773 (TCPP…SGCR), 2776–2815 (SCNI…KNCA), 2818–2857 (TCLP…IYCV), 2860–2897 (TCKN…ATCV), 2902–2941 (TCSS…HHCE), 2944–2986 (NCSS…QNCT), 2989–3025 (NCSG…RNCK), 3028–3066 (ACDE…HLCH), and 3071–3107 (TCPP…ERCG). Intrachain disulfides connect Cys-2697–Cys-2709, Cys-2704–Cys-2722, Cys-2716–Cys-2733, Cys-2738–Cys-2750, Cys-2745–Cys-2763, Cys-2757–Cys-2772, Cys-2777–Cys-2790, Cys-2785–Cys-2803, Cys-2797–Cys-2814, Cys-2819–Cys-2832, Cys-2826–Cys-2845, Cys-2839–Cys-2856, Cys-2861–Cys-2873, Cys-2868–Cys-2886, Cys-2880–Cys-2896, Cys-2903–Cys-2915, Cys-2910–Cys-2928, and Cys-2922–Cys-2940. An N-linked (GlcNAc...) asparagine glycan is attached at Asn-2698. Asn-2778 is a glycosylation site (N-linked (GlcNAc...) asparagine). N-linked (GlcNAc...) asparagine glycosylation is found at Asn-2806 and Asn-2807. N-linked (GlcNAc...) asparagine glycosylation occurs at Asn-2944. 3 disulfide bridges follow: Cys-2945–Cys-2962, Cys-2952–Cys-2975, and Cys-2969–Cys-2985. 2 N-linked (GlcNAc...) asparagine glycosylation sites follow: Asn-2984 and Asn-2989. Cystine bridges form between Cys-2990/Cys-3002, Cys-2997/Cys-3015, Cys-3009/Cys-3024, Cys-3029/Cys-3041, Cys-3036/Cys-3054, Cys-3048/Cys-3065, Cys-3072/Cys-3084, Cys-3079/Cys-3097, and Cys-3091/Cys-3106. An N-linked (GlcNAc...) asparagine glycan is attached at Asn-3122. One can recognise an EGF-like 2; calcium-binding domain in the interval 3149–3189 (DIDECKETPSVCSQKCENLLGSYICKCAPGYTREPDGRSCR). 3 disulfides stabilise this stretch: Cys-3153–Cys-3164, Cys-3160–Cys-3173, and Cys-3175–Cys-3188. Asn-3208, Asn-3254, Asn-3312, and Asn-3352 each carry an N-linked (GlcNAc...) asparagine glycan. LDL-receptor class B repeat units follow at residues 3236–3278 (ERLY…DWVT), 3279–3321 (RKLY…DKPR), 3330–3373 (GYVY…DYTN), 3374–3417 (DLLY…FEDT), and 3418–3458 (IYWT…YHPY). N-linked (GlcNAc...) asparagine glycosylation is found at Asn-3435 and Asn-3444. LDL-receptor class A domains lie at 3509–3547 (MCSS…NTCP), 3550–3588 (FCRL…VLCE), 3591–3629 (RCES…SHCA), 3632–3670 (TCLP…QECM), 3675–3713 (RCDN…QNCE), 3716–3753 (TCKP…ENCV), 3756–3792 (QCSE…RDCE), 3795–3831 (TCHP…ATCP), and 3839–3877 (YCPA…HLCL). Disulfide bonds link Cys-3510–Cys-3523, Cys-3517–Cys-3536, Cys-3530–Cys-3546, Cys-3551–Cys-3563, Cys-3558–Cys-3576, Cys-3570–Cys-3587, Cys-3592–Cys-3604, Cys-3599–Cys-3617, Cys-3611–Cys-3628, Cys-3633–Cys-3645, Cys-3640–Cys-3658, Cys-3652–Cys-3669, Cys-3676–Cys-3690, Cys-3684–Cys-3703, Cys-3697–Cys-3712, Cys-3717–Cys-3730, Cys-3725–Cys-3743, Cys-3737–Cys-3752, Cys-3757–Cys-3769, Cys-3764–Cys-3782, Cys-3776–Cys-3791, Cys-3796–Cys-3808, Cys-3803–Cys-3821, Cys-3815–Cys-3830, Cys-3840–Cys-3852, Cys-3847–Cys-3865, and Cys-3859–Cys-3876. N-linked (GlcNAc...) asparagine glycosylation is present at Asn-3562. Asn-3678 carries an N-linked (GlcNAc...) asparagine glycan. Asn-3878 carries an N-linked (GlcNAc...) asparagine glycan. LDL-receptor class A domains are found at residues 3880-3919 (TCDL…ENCL) and 3925-3961 (PCTE…TGCN). Intrachain disulfides connect Cys-3881/Cys-3894, Cys-3889/Cys-3907, Cys-3901/Cys-3918, Cys-3926/Cys-3938, Cys-3933/Cys-3951, Cys-3945/Cys-3960, Cys-3968/Cys-3977, Cys-3973/Cys-3987, Cys-3989/Cys-4003, Cys-4009/Cys-4019, Cys-4015/Cys-4028, and Cys-4030/Cys-4045. The EGF-like 3 domain maps to 3964 to 4004 (EERSCAENLCEHNCTQLIGGGFICSCRPGFKASSLNRNSCE). Asn-3976 carries N-linked (GlcNAc...) asparagine glycosylation. Residues 4005–4046 (DINECEQFGVCPQNCHNTKGSYECTCAEGFRSMSEHYGERCA) form the EGF-like 4; calcium-binding domain. Asn-4066 is a glycosylation site (N-linked (GlcNAc...) asparagine). LDL-receptor class B repeat units follow at residues 4152 to 4194 (RHIY…NPKQ), 4195 to 4238 (GLMY…DYVN), and 4240 to 4281 (DRIY…FESQ). Asn-4325 carries an N-linked (GlcNAc...) asparagine glycan. In terms of domain architecture, EGF-like 5 spans 4375-4409 (MPPPCRCMNEGNCYFDKNNLPKCKCPSGYMGEYCE). Disulfide bonds link Cys-4379–Cys-4387, Cys-4381–Cys-4397, and Cys-4399–Cys-4408. Residues 4423–4443 (AVLVTLILIIIIGGLVALGFF) form a helical membrane-spanning segment. The Cytoplasmic segment spans residues 4444 to 4652 (HYRKTGSILI…ANLVREDSEA (209 aa)). The short motif at 4450-4459 (SILISMPRLP) is the SH3-binding element. Residues 4453–4458 (ISMPRL) carry the PxLPxI/L motif 1; mediates interaction with ANKRA2 motif. The PxLPxI/L motif 2; mediates interaction with ANKRA2 signature appears at 4456-4461 (PRLPSL). Ser-4460 is modified (phosphoserine). The Endocytosis signal motif lies at 4518-4523 (FENPMY). A compositionally biased stretch (polar residues) spans 4536-4553 (TTTQVSESGNVYNKNYGS). The disordered stretch occupies residues 4536 to 4652 (TTTQVSESGN…ANLVREDSEA (117 aa)). Ser-4568 bears the Phosphoserine mark. Residues 4588 to 4601 (QNTNFENPIYAETE) are interaction with DAB2. Positions 4594 to 4597 (NPIY) match the NPXY motif motif. The SH2-binding motif lies at 4597–4600 (YAET). Residues 4610–4621 (VTPPPSPSPPAK) carry the SH3-binding motif. The residue at position 4615 (Ser-4615) is a Phosphoserine. Polar residues predominate over residues 4626–4636 (KGTTPAYSATE). At Thr-4629 the chain carries Phosphothreonine. A Phosphoserine modification is found at Ser-4650.

This sequence belongs to the LDLR family. Binds plasminogen, extracellular matrix components, plasminogen activator-plasminogen activator inhibitor type I complex, apolipoprotein E-enriched beta-VLDL, lipoprotein lipase, lactoferrin, CLU/clusterin and calcium. Forms a multimeric complex together with LRPAP1. Interacts (via PxLPxI/L motif) with ANKRA2 (via ankyrin repeats). Interacts with LRP2BP. Interacts (via NPXY motif) with DAB2; the interaction is not affected by tyrosine phosphorylation of the NPXY motif. Interacts with MB. Interacts with BMP4. Interacts with the Sonic hedgehog protein N-product which is the active product of SHH. Interacts with CST3 in a calcium-dependent manner. Interacts with the vitamin-D binding protein GC/DBP. Interacts with sex hormone-binding protein SHBG. Interacts with angiotensin-2. Also interacts with angiotensin 1-7. Interacts with APOM. Interacts with selenoprotein SEPP1. Interacts with LEP. Interacts with ALB. Interacts with the antiapoptotic protein BIRC5/survivin. Interacts with matrix metalloproteinase MMP2 in complex with metalloproteinase inhibitor TIMP1. In neurons, forms a trimeric complex with APP and APPB1/FE65. Interacts with LDLRAP1/ARH; mediates trafficking of LRP2 to the endocytic recycling compartment. Does not interact with beta-amyloid protein 40 alone but interacts with the complex composed of beta-amyloid protein 40 and CLU/APOJ. Interacts with MDK. A fraction undergoes proteolytic cleavage of the extracellular domain at the cell membrane to generate a cytoplasmic tail fragment. This is internalized into the early endosome from where it trafficks in an LDLRAP1/ARH-dependent manner to the endocytic recycling compartment (ERC). In the ERC, it is further cleaved by gamma-secretase to release a fragment which translocates to the nucleus and mediates transcriptional repression. Post-translationally, N-glycosylation is required for ligand binding.

The protein localises to the apical cell membrane. It localises to the endosome lumen. Its subcellular location is the membrane. It is found in the clathrin-coated pit. The protein resides in the cell projection. The protein localises to the dendrite. It localises to the axon. In terms of biological role, multiligand endocytic receptor. Acts together with CUBN to mediate endocytosis of high-density lipoproteins. Mediates receptor-mediated uptake of polybasic drugs such as aprotinin, aminoglycosides and polymyxin B. In the kidney, mediates the tubular uptake and clearance of leptin. Also mediates transport of leptin across the blood-brain barrier through endocytosis at the choroid plexus epithelium. Endocytosis of leptin in neuronal cells is required for hypothalamic leptin signaling and leptin-mediated regulation of feeding and body weight. Mediates endocytosis and subsequent lysosomal degradation of CST3 in kidney proximal tubule cells. Mediates renal uptake of 25-hydroxyvitamin D3 in complex with the vitamin D3 transporter GC/DBP. Mediates renal uptake of metallothionein-bound heavy metals. Together with CUBN, mediates renal reabsorption of myoglobin. Mediates renal uptake and subsequent lysosomal degradation of APOM. Plays a role in kidney selenium homeostasis by mediating renal endocytosis of selenoprotein SEPP1. Mediates renal uptake of the antiapoptotic protein BIRC5/survivin which may be important for functional integrity of the kidney. Mediates renal uptake of matrix metalloproteinase MMP2 in complex with metalloproteinase inhibitor TIMP1. Mediates endocytosis of Sonic hedgehog protein N-product (ShhN), the active product of SHH. Also mediates ShhN transcytosis. In the embryonic neuroepithelium, mediates endocytic uptake and degradation of BMP4, is required for correct SHH localization in the ventral neural tube and plays a role in patterning of the ventral telencephalon. Required at the onset of neurulation to sequester SHH on the apical surface of neuroepithelial cells of the rostral diencephalon ventral midline and to control PTCH1-dependent uptake and intracellular trafficking of SHH. During neurulation, required in neuroepithelial cells for uptake of folate bound to the folate receptor FOLR1 which is necessary for neural tube closure. In the adult brain, negatively regulates BMP signaling in the subependymal zone which enables neurogenesis to proceed. In astrocytes, mediates endocytosis of ALB which is required for the synthesis of the neurotrophic factor oleic acid. Involved in neurite branching. During optic nerve development, required for SHH-mediated migration and proliferation of oligodendrocyte precursor cells. Mediates endocytic uptake and clearance of SHH in the retinal margin which protects retinal progenitor cells from mitogenic stimuli and keeps them quiescent. Plays a role in reproductive organ development by mediating uptake in reproductive tissues of androgen and estrogen bound to the sex hormone binding protein SHBG. Mediates endocytosis of angiotensin-2. Also mediates endocytosis of angiotensis 1-7. Binds to the complex composed of beta-amyloid protein 40 and CLU/APOJ and mediates its endocytosis and lysosomal degradation. Required for embryonic heart development. Required for normal hearing, possibly through interaction with estrogen in the inner ear. The chain is Low-density lipoprotein receptor-related protein 2 from Sus scrofa (Pig).